The following is a 183-amino-acid chain: Shikimate kinase (183 aa).

An ATP-binding site is contributed by 19 to 24; that stretch reads GAGKTT. Residue Thr-23 participates in Mg(2+) binding. 3 residues coordinate substrate: Asp-41, Arg-65, and Gly-87. Position 124 (Arg-124) interacts with ATP. Substrate is bound at residue Arg-143.

It belongs to the shikimate kinase family. Monomer. Requires Mg(2+) as cofactor.

The protein resides in the cytoplasm. It carries out the reaction shikimate + ATP = 3-phosphoshikimate + ADP + H(+). Its pathway is metabolic intermediate biosynthesis; chorismate biosynthesis; chorismate from D-erythrose 4-phosphate and phosphoenolpyruvate: step 5/7. In terms of biological role, catalyzes the specific phosphorylation of the 3-hydroxyl group of shikimic acid using ATP as a cosubstrate. The chain is Shikimate kinase from Thermosynechococcus vestitus (strain NIES-2133 / IAM M-273 / BP-1).